We begin with the raw amino-acid sequence, 273 residues long: 3-methyl-2-oxobutanoate hydroxymethyltransferase (273 aa).

Residues Asp-49 and Asp-88 each coordinate Mg(2+). 3-methyl-2-oxobutanoate is bound by residues Asp-49–Ser-50, Asp-88, and Lys-118. Mg(2+) is bound at residue Glu-120. Residue Glu-187 is the Proton acceptor of the active site.

It belongs to the PanB family. Homodecamer; pentamer of dimers. Requires Mg(2+) as cofactor.

It localises to the cytoplasm. The enzyme catalyses 3-methyl-2-oxobutanoate + (6R)-5,10-methylene-5,6,7,8-tetrahydrofolate + H2O = 2-dehydropantoate + (6S)-5,6,7,8-tetrahydrofolate. The protein operates within cofactor biosynthesis; (R)-pantothenate biosynthesis; (R)-pantoate from 3-methyl-2-oxobutanoate: step 1/2. In terms of biological role, catalyzes the reversible reaction in which hydroxymethyl group from 5,10-methylenetetrahydrofolate is transferred onto alpha-ketoisovalerate to form ketopantoate. The chain is 3-methyl-2-oxobutanoate hydroxymethyltransferase from Sinorhizobium fredii (strain NBRC 101917 / NGR234).